Here is a 356-residue protein sequence, read N- to C-terminus: Probable dual-specificity RNA methyltransferase RlmN (356 aa).

The Proton acceptor role is filled by E100. The Radical SAM core domain maps to T106–D340. A disulfide bridge connects residues C113 and C345. [4Fe-4S] cluster-binding residues include C120, C124, and C127. S-adenosyl-L-methionine is bound by residues G167–E168, S197, S226–H228, and N302. C345 acts as the S-methylcysteine intermediate in catalysis.

The protein belongs to the radical SAM superfamily. RlmN family. [4Fe-4S] cluster is required as a cofactor.

It is found in the cytoplasm. It catalyses the reaction adenosine(2503) in 23S rRNA + 2 reduced [2Fe-2S]-[ferredoxin] + 2 S-adenosyl-L-methionine = 2-methyladenosine(2503) in 23S rRNA + 5'-deoxyadenosine + L-methionine + 2 oxidized [2Fe-2S]-[ferredoxin] + S-adenosyl-L-homocysteine. The enzyme catalyses adenosine(37) in tRNA + 2 reduced [2Fe-2S]-[ferredoxin] + 2 S-adenosyl-L-methionine = 2-methyladenosine(37) in tRNA + 5'-deoxyadenosine + L-methionine + 2 oxidized [2Fe-2S]-[ferredoxin] + S-adenosyl-L-homocysteine. Specifically methylates position 2 of adenine 2503 in 23S rRNA and position 2 of adenine 37 in tRNAs. This Prochlorococcus marinus (strain MIT 9211) protein is Probable dual-specificity RNA methyltransferase RlmN.